A 320-amino-acid chain; its full sequence is Zinc finger protein 330 (320 aa).

The interval 1-23 (MPKKKTGARKKAENRREREKQLR) is disordered. The Nuclear localization signal signature appears at 3-11 (KKKTGARKK). Residues 10 to 22 (KKAENRREREKQL) are compositionally biased toward basic and acidic residues. 4 C4-type zinc fingers span residues 42-58 (CDKCQRRQKNRAFCYFC), 67-104 (CAQCGKTKCMMKSSDCVIKHAGVYSTGLAMVGAICDFC), 129-149 (CVECERGVWDHGGRIFSCSFC), and 175-189 (CVSCNRLGQHSCLRC). A disordered region spans residues 206 to 320 (EKGKQPPCPK…GYAHYEEQEN (115 aa)). Basic and acidic residues predominate over residues 216–225 (CGHETQETKD). Over residues 269–285 (DEEEDEYEAEDDEEEED) the composition is skewed to acidic residues. S291 carries the phosphoserine modification.

This sequence belongs to the NOA36 family. Widely expressed. Higher expression seen in heart and skeletal muscle.

The protein localises to the nucleus. The protein resides in the nucleolus. It localises to the chromosome. It is found in the centromere. This Homo sapiens (Human) protein is Zinc finger protein 330 (ZNF330).